Reading from the N-terminus, the 459-residue chain is Cobyrinate a,c-diamide synthase (459 aa).

Residues 249–446 (RIGMAFDEAF…VHTHFASRPG (198 aa)) enclose the GATase cobBQ-type domain. The active-site Nucleophile is the Cys-332.

This sequence belongs to the CobB/CbiA family. Requires Mg(2+) as cofactor.

It catalyses the reaction cob(II)yrinate + 2 L-glutamine + 2 ATP + 2 H2O = cob(II)yrinate a,c diamide + 2 L-glutamate + 2 ADP + 2 phosphate + 2 H(+). The protein operates within cofactor biosynthesis; adenosylcobalamin biosynthesis; cob(II)yrinate a,c-diamide from sirohydrochlorin (anaerobic route): step 10/10. Its function is as follows. Catalyzes the ATP-dependent amidation of the two carboxylate groups at positions a and c of cobyrinate, using either L-glutamine or ammonia as the nitrogen source. This chain is Cobyrinate a,c-diamide synthase, found in Syntrophotalea carbinolica (strain DSM 2380 / NBRC 103641 / GraBd1) (Pelobacter carbinolicus).